The sequence spans 357 residues: Isopenicillin-N N-acyltransferase (357 aa).

Positions 121 and 310 each coordinate 6-aminopenicillanate.

It belongs to the peptidase C45 family. In terms of assembly, the active form of the enzyme results from processing of the 40-kDa monomeric precursor to a heterodimer containing subunits of 11 and 29 kDa. In terms of processing, the pre-AAT protein is synthesized as 40 kDa precursor which is then self-processed into an 11 kDa (protein A) and a 29 kDa (protein B). The B protein carries AAT activity.

It is found in the peroxisome matrix. The catalysed reaction is isopenicillin N + phenylacetyl-CoA + H2O = penicillin G + L-2-aminoadipate + CoA + H(+). It participates in antibiotic biosynthesis; penicillin G biosynthesis; penicillin G from L-alpha-aminoadipate and L-cysteine and L-valine: step 3/3. In terms of biological role, isopenicillin-N N-acyltransferase; part of the gene cluster that mediates the biosynthesis of penicillin, the world's most important antibiotic. AatA catalyzes the exchange of the alpha-aminoadipyl side chain of isopenicillin N for phenylacetic acid to yield penicillin. This step occurs in the peroxisomal matrix and the penM and paaT transporters are involved in the isopenicillin N and phenylacetic acid import into the peroxisome, respectively. The penicillin biosynthesis occurs via 3 enzymatic steps, the first corresponding to the production of the tripeptide N-[(5S)-5-amino-5-carboxypentanoyl]-L-cysteinyl-D-valine (LLD-ACV or ACV) by the NRPS acvA. The tripeptide ACV is then cyclized to isopenicillin N (IPN) by the isopenicillin N synthase ipnA that forms the beta-lactam nucleus. Finally, the alpha-aminoadipyl side chain is exchanged for phenylacetic acid by the isopenicillin N acyltransferase aatA to yield penicillin in the peroxisomal matrix. This Penicillium chrysogenum (Penicillium notatum) protein is Isopenicillin-N N-acyltransferase.